The primary structure comprises 299 residues: 4-hydroxybenzoate octaprenyltransferase (299 aa).

The next 8 helical transmembrane spans lie at 33 to 53, 56 to 76, 105 to 125, 151 to 171, 180 to 200, 214 to 234, 247 to 267, and 278 to 298; these read VGFL…ADGV, WWTL…GCVI, NALL…LTMN, LPQV…FAAI, WLLY…YAMV, AILF…LMLL, HTYW…FIIA, and AFMH…LATT.

This sequence belongs to the UbiA prenyltransferase family. The cofactor is Mg(2+).

It localises to the cell inner membrane. It catalyses the reaction all-trans-octaprenyl diphosphate + 4-hydroxybenzoate = 4-hydroxy-3-(all-trans-octaprenyl)benzoate + diphosphate. It functions in the pathway cofactor biosynthesis; ubiquinone biosynthesis. Catalyzes the prenylation of para-hydroxybenzoate (PHB) with an all-trans polyprenyl group. Mediates the second step in the final reaction sequence of ubiquinone-8 (UQ-8) biosynthesis, which is the condensation of the polyisoprenoid side chain with PHB, generating the first membrane-bound Q intermediate 3-octaprenyl-4-hydroxybenzoate. The polypeptide is 4-hydroxybenzoate octaprenyltransferase (Xylella fastidiosa (strain M23)).